The chain runs to 137 residues: Holo-[acyl-carrier-protein] synthase (137 aa).

Residues Asp-8 and Glu-57 each coordinate Mg(2+).

The protein belongs to the P-Pant transferase superfamily. AcpS family. Mg(2+) serves as cofactor.

It localises to the cytoplasm. The catalysed reaction is apo-[ACP] + CoA = holo-[ACP] + adenosine 3',5'-bisphosphate + H(+). Its function is as follows. Transfers the 4'-phosphopantetheine moiety from coenzyme A to a Ser of acyl-carrier-protein. This chain is Holo-[acyl-carrier-protein] synthase, found in Cereibacter sphaeroides (strain ATCC 17025 / ATH 2.4.3) (Rhodobacter sphaeroides).